Here is a 1104-residue protein sequence, read N- to C-terminus: General transcription factor II-I repeat domain-containing protein 1 (1104 aa).

Residues Lys-27, Lys-184, Lys-212, Lys-225, Lys-238, Lys-271, Lys-337, Lys-436, Lys-439, and Lys-443 each participate in a glycyl lysine isopeptide (Lys-Gly) (interchain with G-Cter in SUMO2) cross-link. The GTF2I-like 1 repeat unit spans residues 119-213 (LEQCSDVYLL…PDDGGQDTKA (95 aa)). The GTF2I-like 2 repeat unit spans residues 342 to 436 (IKEMEDINTL…FDERIFTGNK (95 aa)). The residue at position 448 (Ser-448) is a Phosphoserine. The tract at residues 509 to 559 (SDPSPTSEEMTDSLPGHLPSEDSGYGMEMPADKGPSEEPWSEERPAEESPG) is disordered. Over residues 538–555 (PADKGPSEEPWSEERPAE) the composition is skewed to basic and acidic residues. Residues 556–650 (ESPGDVIRPL…ELLTDGVKEP (95 aa)) form a GTF2I-like 3 repeat. Glycyl lysine isopeptide (Lys-Gly) (interchain with G-Cter in SUMO2) cross-links involve residues Lys-567, Lys-579, Lys-588, Lys-622, Lys-638, Lys-669, Lys-709, Lys-717, Lys-757, Lys-759, and Lys-772. A GTF2I-like 4 repeat occupies 681-775 (LSRIDIANTL…FQGLIPKPET (95 aa)). The segment at 783–802 (EAGKTTRPRRLQQDTWQPDE) is disordered. A GTF2I-like 5 repeat occupies 805-899 (ANRLGEKVIL…LQPFAEVCND (95 aa)). Glycyl lysine isopeptide (Lys-Gly) (interchain with G-Cter in SUMO2) cross-links involve residues Lys-841 and Lys-901. A GTF2I-like 6 repeat occupies 908–1002 (SNKLGKKVIL…LQPFGDVCNN (95 aa)). Disordered stretches follow at residues 1001–1044 (NNAK…VAST) and 1058–1104 (LHPN…LPTR). A Nuclear localization signal motif is present at residues 1012 to 1019 (PKRKRKRV). Over residues 1021 to 1043 (EGNSVSSSSSSSSSSSNPESVAS) the composition is skewed to low complexity.

This sequence belongs to the TFII-I family. Interacts with the retinoblastoma protein (RB1) via its C-terminus. Widely expressed.

Its subcellular location is the nucleus. Functionally, may be a transcription regulator involved in cell-cycle progression and skeletal muscle differentiation. May repress GTF2I transcriptional functions, by preventing its nuclear residency, or by inhibiting its transcriptional activation. May contribute to slow-twitch fiber type specificity during myogenesis and in regenerating muscles. Binds troponin I slow-muscle fiber enhancer (USE B1). Binds specifically and with high affinity to the EFG sequences derived from the early enhancer of HOXC8. This is General transcription factor II-I repeat domain-containing protein 1 (Gtf2ird1) from Mus musculus (Mouse).